We begin with the raw amino-acid sequence, 131 residues long: Fatty acid-binding protein (131 aa).

(5Z,8Z,11Z,14Z)-eicosatetraenoate-binding positions include Arg106 and 126 to 128 (RFY). (9Z)-octadecenoate-binding positions include Arg106 and 126 to 128 (RFY).

The protein belongs to the calycin superfamily. Fatty-acid binding protein (FABP) family.

It is found in the cytoplasm. Functionally, FABPs are thought to play a role in the intracellular transport of long-chain fatty acids and their acyl-CoA esters. The protein is Fatty acid-binding protein of Tyrophagus putrescentiae (Mold mite).